Here is a 308-residue protein sequence, read N- to C-terminus: Putative hydrolase MT0526 (308 aa).

Residues 1-48 (MMVSSHLGSPDQAGHVDLASPADPPPPDASASHSPVDMPAPVAAAGSD) are disordered. Asp-62 serves as the catalytic Nucleophile. Mg(2+)-binding residues include Asp-62, Asp-64, and Asp-237. The active-site Proton donor is the Asp-64.

Belongs to the HAD-like hydrolase superfamily. SerB family. Mg(2+) is required as a cofactor.

This chain is Putative hydrolase MT0526, found in Mycobacterium tuberculosis (strain CDC 1551 / Oshkosh).